Reading from the N-terminus, the 202-residue chain is Putative 3-methyladenine DNA glycosylase (202 aa).

The protein belongs to the DNA glycosylase MPG family.

This chain is Putative 3-methyladenine DNA glycosylase, found in Clostridioides difficile (strain 630) (Peptoclostridium difficile).